The following is a 153-amino-acid chain: Deoxyuridine 5'-triphosphate nucleotidohydrolase (153 aa).

Residues 71-73 (RSG), Asn-84, 88-90 (TID), and Lys-98 each bind substrate.

The protein belongs to the dUTPase family. The cofactor is Mg(2+).

The catalysed reaction is dUTP + H2O = dUMP + diphosphate + H(+). It functions in the pathway pyrimidine metabolism; dUMP biosynthesis; dUMP from dCTP (dUTP route): step 2/2. This enzyme is involved in nucleotide metabolism: it produces dUMP, the immediate precursor of thymidine nucleotides and it decreases the intracellular concentration of dUTP so that uracil cannot be incorporated into DNA. The polypeptide is Deoxyuridine 5'-triphosphate nucleotidohydrolase (Wolbachia sp. subsp. Drosophila simulans (strain wRi)).